The chain runs to 630 residues: DELLA protein DWARF8 (630 aa).

A disordered region spans residues 1-35 (MKREYQDAGGSGGDMGSSKDKMMAAAAGAGEQEEE). A DELLA motif motif is present at residues 38–42 (DELLA). The interval 161-222 (PIPSPVAAPS…AAPPATQASA (62 aa)) is disordered. Low complexity-rich tracts occupy residues 165 to 176 (PVAAPSADPSTD) and 191 to 222 (TSSSSSSSSSMDGGRTRSSVVEAAPPATQASA). Residues 234–623 (VDTQEAGIRL…RPLIATSAWR (390 aa)) enclose the GRAS domain. Positions 241 to 297 (IRLVHALLACAEAVQQENFSAAEALVKQIPMLASSQGGAMRKVAAYFGEALARRVYR) are leucine repeat I (LRI). The short motif at 248–252 (LACAE) is the LxCxE motif element. Residues 316–381 (HAHFYESCPY…GGPPSFRLTG (66 aa)) are VHIID. Residues 347-351 (VHVVD) carry the VHIID motif. The tract at residues 395–427 (QVGWKLAQFAHTIRVDFQYRGLVAATLADLEPF) is leucine repeat II (LRII). The PFYRE stretch occupies residues 443 to 544 (IAVNSVFELH…EVYLGRQICN (102 aa)). Positions 451 to 455 (LHRLL) match the LXXLL motif motif. The segment at 547–623 (ACEGAERTER…RPLIATSAWR (77 aa)) is SAW.

The protein belongs to the GRAS family. DELLA subfamily. Phosphorylated. Post-translationally, ubiquitinated. Upon GA application it is ubiquitinated, leading to its subsequent degradation.

It localises to the nucleus. Functionally, probable transcriptional regulator that acts as a repressor of the gibberellin (GA) signaling pathway. Probably acts by participating in large multiprotein complexes that repress transcription of GA-inducible genes. Upon GA application, it is degraded by the proteasome, allowing the GA signaling pathway. This Zea mays (Maize) protein is DELLA protein DWARF8 (D8).